The chain runs to 1134 residues: DNA polymerase II large subunit (1134 aa).

The protein belongs to the archaeal DNA polymerase II family. In terms of assembly, heterodimer of a large subunit and a small subunit.

It catalyses the reaction DNA(n) + a 2'-deoxyribonucleoside 5'-triphosphate = DNA(n+1) + diphosphate. The catalysed reaction is Exonucleolytic cleavage in the 3'- to 5'-direction to yield nucleoside 5'-phosphates.. Functionally, possesses two activities: a DNA synthesis (polymerase) and an exonucleolytic activity that degrades single-stranded DNA in the 3'- to 5'-direction. Has a template-primer preference which is characteristic of a replicative DNA polymerase. This is DNA polymerase II large subunit from Methanocella arvoryzae (strain DSM 22066 / NBRC 105507 / MRE50).